We begin with the raw amino-acid sequence, 471 residues long: E3 ubiquitin-protein ligase TRIM38 (471 aa).

Residues 16–62 form an RING-type zinc finger; that stretch reads CSICKAMMSHPVSINCGHSYCKSCIQSYYCNVSPKTGWKMLGCPLCS. Residues 90–131 form a B box-type zinc finger; that stretch reads DQDMVCEEHEEKFNRFCEDDGQLLCWRCYWEDRHKGHTLAHV. C95, H98, C117, and H123 together coordinate Zn(2+). A B30.2/SPRY domain is found at 276–471; the sequence is CNVSELYFDV…PLFLPAINNQ (196 aa).

In terms of assembly, interacts (via B30.2/SPRY domain) with TAB2 and TAB3.

The protein resides in the cytoplasm. The catalysed reaction is S-ubiquitinyl-[E2 ubiquitin-conjugating enzyme]-L-cysteine + [acceptor protein]-L-lysine = [E2 ubiquitin-conjugating enzyme]-L-cysteine + N(6)-ubiquitinyl-[acceptor protein]-L-lysine.. Its pathway is protein modification; protein ubiquitination. The protein operates within protein modification; protein sumoylation. Functionally, E3 ubiquitin-protein and E3 SUMO-protein ligase that acts as a regulator of innate immunity. Acts as a negative regulator of type I interferon IFN-beta production by catalyzing 'Lys-48'-linked polyubiquitination of AZI2/NAP1, leading to its degradation. Mediates 'Lys-48'-linked polyubiquitination and proteasomal degradation of the critical TLR adapter TICAM1, inhibiting TLR3-mediated type I interferon signaling. Acts as a positive regulator of the cGAS-STING pathway by acting as a E3 SUMO-protein ligase: mediates sumoylation of CGAS and STING, preventing their degradation and thereby activating the innate immune response to DNA virus. Also acts as a negative regulator of NF-kappa-B signaling independently of its E3 protein ligase activity by promoting lysosome-dependent degradation of TAB2 and TAB3 adapters. The protein is E3 ubiquitin-protein ligase TRIM38 of Mus musculus (Mouse).